The primary structure comprises 239 residues: Ribosomal RNA small subunit methyltransferase G (239 aa).

S-adenosyl-L-methionine-binding positions include glycine 78, phenylalanine 83, 129–130 (AE), and arginine 148.

The protein belongs to the methyltransferase superfamily. RNA methyltransferase RsmG family.

It localises to the cytoplasm. In terms of biological role, specifically methylates the N7 position of a guanine in 16S rRNA. The polypeptide is Ribosomal RNA small subunit methyltransferase G (Desulfitobacterium hafniense (strain Y51)).